A 516-amino-acid chain; its full sequence is Cytochrome P450 monooxygenase ntnM (516 aa).

The chain crosses the membrane as a helical span at residues 22-42 (IINVILSIAAIALIRALAISI). Residue cysteine 453 coordinates heme.

Belongs to the cytochrome P450 family. Heme serves as cofactor.

The protein localises to the membrane. The protein operates within secondary metabolite biosynthesis; terpenoid biosynthesis. In terms of biological role, cytochrome P450 monooxygenase; part of the gene cluster that mediates the biosynthesis of the meroterpenoids nectripenoids A and B, as well as cochliquninone D and isocochliquninone E. The pathway probably begins with the HR-PKS ntnH that catalyzes two chain-extension steps to form a reduced triketide, which then primes the SAT domain in the NR-PKS ntnG to initiate three more cycles of extension to give a linear hexaketide corresponding to the polyketide part of nectripenoids. The FAD-dependent monooxygenase ntnJ then performs an oxidative decarboxylation at C11 of the ntnH/ntnG product, via an electrophilic aromatic hydroxylation with concomitant ipso-decarboxylation. The membrane-bound polyprenyl transferase ntnF then introduces a farnesyl group before the FAD-dependent monooxygenase ntnK functions as the first epoxidase on terminal C12'-C13' olefin, followed by a second epoxidation on C7'-C8' catalyzed by ntnA. The terpene cyclase/mutase ntnI then initiates the sequential tricyclic ring formation through protonation of the terminal epoxide and catalyzes the regioselective and stereoselective 6/6/6-tricyclic ring formation. The cytochrome P450 monooxygenase ntnM may then hydroxylate C1'. The sequence is that of Cytochrome P450 monooxygenase ntnM from Nectria sp.